A 491-amino-acid chain; its full sequence is UDP-N-acetylmuramate--L-alanine ligase (491 aa).

ATP is bound at residue 126–132; sequence GTHGKTT.

The protein belongs to the MurCDEF family.

The protein localises to the cytoplasm. The catalysed reaction is UDP-N-acetyl-alpha-D-muramate + L-alanine + ATP = UDP-N-acetyl-alpha-D-muramoyl-L-alanine + ADP + phosphate + H(+). Its pathway is cell wall biogenesis; peptidoglycan biosynthesis. In terms of biological role, cell wall formation. The protein is UDP-N-acetylmuramate--L-alanine ligase of Shigella boydii serotype 18 (strain CDC 3083-94 / BS512).